The primary structure comprises 1345 residues: DNA-directed RNA polymerase subunit beta (1345 aa).

Belongs to the RNA polymerase beta chain family. In terms of assembly, the RNAP catalytic core consists of 2 alpha, 1 beta, 1 beta' and 1 omega subunit. When a sigma factor is associated with the core the holoenzyme is formed, which can initiate transcription.

The enzyme catalyses RNA(n) + a ribonucleoside 5'-triphosphate = RNA(n+1) + diphosphate. Functionally, DNA-dependent RNA polymerase catalyzes the transcription of DNA into RNA using the four ribonucleoside triphosphates as substrates. The protein is DNA-directed RNA polymerase subunit beta of Shewanella sp. (strain ANA-3).